We begin with the raw amino-acid sequence, 313 residues long: Porphobilinogen deaminase (313 aa).

C242 carries the S-(dipyrrolylmethanemethyl)cysteine modification.

It belongs to the HMBS family. As to quaternary structure, monomer. Dipyrromethane is required as a cofactor.

The catalysed reaction is 4 porphobilinogen + H2O = hydroxymethylbilane + 4 NH4(+). The protein operates within porphyrin-containing compound metabolism; protoporphyrin-IX biosynthesis; coproporphyrinogen-III from 5-aminolevulinate: step 2/4. Functionally, tetrapolymerization of the monopyrrole PBG into the hydroxymethylbilane pre-uroporphyrinogen in several discrete steps. In Salmonella arizonae (strain ATCC BAA-731 / CDC346-86 / RSK2980), this protein is Porphobilinogen deaminase.